Reading from the N-terminus, the 452-residue chain is Tubulin alpha-1D chain (452 aa).

Residues 1–4 (MREC) carry the MREC motif motif. Q11 lines the GTP pocket. At K40 the chain carries N6-acetyllysine. GTP contacts are provided by E71, S140, G144, T145, T179, N206, and N228. E71 contacts Mg(2+). E254 is an active-site residue. Y282 is subject to 3'-nitrotyrosine. Residues 432–452 (YEEVGMDSVEGEGEEEEGDEY) form a disordered region. Phosphoserine is present on S439. E446 bears the 5-glutamyl polyglutamate mark. Position 452 is a 3'-nitrotyrosine (Y452).

The protein belongs to the tubulin family. Dimer of alpha and beta chains. A typical microtubule is a hollow water-filled tube with an outer diameter of 25 nm and an inner diameter of 15 nM. Alpha-beta heterodimers associate head-to-tail to form protofilaments running lengthwise along the microtubule wall with the beta-tubulin subunit facing the microtubule plus end conferring a structural polarity. Microtubules usually have 13 protofilaments but different protofilament numbers can be found in some organisms and specialized cells. Mg(2+) is required as a cofactor. In terms of processing, some glutamate residues at the C-terminus are polyglycylated, resulting in polyglycine chains on the gamma-carboxyl group. Glycylation is mainly limited to tubulin incorporated into axonemes (cilia and flagella) whereas glutamylation is prevalent in neuronal cells, centrioles, axonemes, and the mitotic spindle. Both modifications can coexist on the same protein on adjacent residues, and lowering polyglycylation levels increases polyglutamylation, and reciprocally. Cilia and flagella glycylation is required for their stability and maintenance. Flagella glycylation controls sperm motility. Some glutamate residues at the C-terminus are polyglutamylated, resulting in polyglutamate chains on the gamma-carboxyl group. Polyglutamylation plays a key role in microtubule severing by spastin (SPAST). SPAST preferentially recognizes and acts on microtubules decorated with short polyglutamate tails: severing activity by SPAST increases as the number of glutamates per tubulin rises from one to eight, but decreases beyond this glutamylation threshold. Glutamylation is also involved in cilia motility. Post-translationally, acetylation of alpha chains at Lys-40 is located inside the microtubule lumen. This modification has been correlated with increased microtubule stability, intracellular transport and ciliary assembly. In terms of processing, methylation of alpha chains at Lys-40 is found in mitotic microtubules and is required for normal mitosis and cytokinesis contributing to genomic stability. Nitration of Tyr-452 is irreversible and interferes with normal dynein intracellular distribution. Post-translationally, undergoes a tyrosination/detyrosination cycle, the cyclic removal and re-addition of a C-terminal tyrosine residue by the enzymes tubulin tyrosine carboxypeptidase (MATCAP, VASH1 or VASH2) and tubulin tyrosine ligase (TTL), respectively. In terms of processing, tyrosination promotes microtubule interaction with CAP-Gly domain-containing proteins such as CLIP1, CLIP2 and DCTN1. Tyrosination regulates the initiation of dynein-dynactin motility via interaction with DCTN1, which brings the dynein-dynactin complex into contact with microtubules. In neurons, tyrosinated tubulins mediate the initiation of retrograde vesicle transport. Detyrosination is involved in metaphase plate congression by guiding chromosomes during mitosis: detyrosination promotes interaction with CENPE, promoting pole-proximal transport of chromosomes toward the equator. Detyrosination increases microtubules-dependent mechanotransduction in dystrophic cardiac and skeletal muscle. In cardiomyocytes, detyrosinated microtubules are required to resist to contractile compression during contraction: detyrosination promotes association with desmin (DES) at force-generating sarcomeres, leading to buckled microtubules and mechanical resistance to contraction.

Its subcellular location is the cytoplasm. It is found in the cytoskeleton. The enzyme catalyses GTP + H2O = GDP + phosphate + H(+). Its function is as follows. Tubulin is the major constituent of microtubules, a cylinder consisting of laterally associated linear protofilaments composed of alpha- and beta-tubulin heterodimers. Microtubules grow by the addition of GTP-tubulin dimers to the microtubule end, where a stabilizing cap forms. Below the cap, tubulin dimers are in GDP-bound state, owing to GTPase activity of alpha-tubulin. In Bos taurus (Bovine), this protein is Tubulin alpha-1D chain (TUBA1D).